A 669-amino-acid chain; its full sequence is DNA ligase (669 aa).

Residues 34–38 (DAEYD), 83–84 (SL), and glutamate 114 each bind NAD(+). Lysine 116 functions as the N6-AMP-lysine intermediate in the catalytic mechanism. Arginine 137, glutamate 171, lysine 287, and lysine 311 together coordinate NAD(+). Residues cysteine 405, cysteine 408, cysteine 423, and cysteine 428 each contribute to the Zn(2+) site. One can recognise a BRCT domain in the interval 591–669 (NVESYFAGKT…EERFLQELNK (79 aa)).

Belongs to the NAD-dependent DNA ligase family. LigA subfamily. Requires Mg(2+) as cofactor. The cofactor is Mn(2+).

The enzyme catalyses NAD(+) + (deoxyribonucleotide)n-3'-hydroxyl + 5'-phospho-(deoxyribonucleotide)m = (deoxyribonucleotide)n+m + AMP + beta-nicotinamide D-nucleotide.. Its function is as follows. DNA ligase that catalyzes the formation of phosphodiester linkages between 5'-phosphoryl and 3'-hydroxyl groups in double-stranded DNA using NAD as a coenzyme and as the energy source for the reaction. It is essential for DNA replication and repair of damaged DNA. In Bacillus cereus (strain ATCC 14579 / DSM 31 / CCUG 7414 / JCM 2152 / NBRC 15305 / NCIMB 9373 / NCTC 2599 / NRRL B-3711), this protein is DNA ligase.